A 790-amino-acid polypeptide reads, in one-letter code: Probable phosphoketolase (790 aa).

Belongs to the XFP family. It depends on thiamine diphosphate as a cofactor.

This Nitrosomonas europaea (strain ATCC 19718 / CIP 103999 / KCTC 2705 / NBRC 14298) protein is Probable phosphoketolase.